A 418-amino-acid polypeptide reads, in one-letter code: FAD-dependent monooxygenase fmqB (418 aa).

Residues Val-12 and Arg-68 each contribute to the FAD site. Arg-147 is an active-site residue. FAD-binding residues include Asp-272 and Gly-285.

Belongs to the paxM FAD-dependent monooxygenase family.

The protein localises to the cytoplasm. It participates in alkaloid biosynthesis. Its function is as follows. FAD-dependent monooxygenase; part of the gene cluster that mediates the biosynthesis of the antitumor fumiquinazolines that confer a dual-usage capability to defend against phagocytes in the environment and animal hosts. The simplest member is fumiquinazoline F (FQF) with a 6-6-6 tricyclic core derived from anthranilic acid (Ant), tryptophan (Trp), and alanine (Ala). The trimodular NRPS fmqA is responsible for FQF formation. Modules 1, 2 and 3 of fmqA are predicted to activate and load Ant, Trp and Ala, respectively, providing for the assembly of an Ant-Trp-Ala-S-enzyme intermediate that would undergo double cyclization for chain release and generation of the tricyclic 6-6-6 product fumiquinazoline F. The presence of an E domain predicted for module 2 of fmqA is consistent with epimerization of L-Trp to D-Trp during assembly to generate the R-stereocenter at C14 of FQF. The FAD-dependent monooxygenase fmqB and the monomodular NRPS fmqC then maturate FQF to FQA. FmqB oxidizes the 2',3'-double bond of the indole side chain of FQF, and fmqC activates L-Ala as the adenylate, installs it as the pantetheinyl thioester on its carrier protein domain, and acylates the oxidized indole for subsequent intramolecular cyclization to create the 6-5-5-imidazolindolone of FQA. The FAD-linked oxidoreductase fmqD introduces a third layer of scaffold complexity by converting FQA to the spirohemiaminal FQC, presumably by catalyzing the formation of a transient imine within the pyrazinone ring. FQC subsequently converts nonenzymatically to the known cyclic aminal FQD. The polypeptide is FAD-dependent monooxygenase fmqB (Aspergillus fumigatus (strain ATCC MYA-4609 / CBS 101355 / FGSC A1100 / Af293) (Neosartorya fumigata)).